The chain runs to 375 residues: Chaperone protein DnaJ (375 aa).

The region spanning 5-70 (DYYEVLGVER…GKRMAYDQYG (66 aa)) is the J domain. A CR-type zinc finger spans residues 134 to 212 (GTTVTIRVPT…CHGQGRVEEH (79 aa)). Positions 147, 150, 164, 167, 186, 189, 200, and 203 each coordinate Zn(2+). CXXCXGXG motif repeat units lie at residues 147 to 154 (CKTCDGSG), 164 to 171 (CTTCGGIG), 186 to 193 (CPRCHGSG), and 200 to 207 (CPDCHGQG).

This sequence belongs to the DnaJ family. Homodimer. The cofactor is Zn(2+).

Its subcellular location is the cytoplasm. Functionally, participates actively in the response to hyperosmotic and heat shock by preventing the aggregation of stress-denatured proteins and by disaggregating proteins, also in an autonomous, DnaK-independent fashion. Unfolded proteins bind initially to DnaJ; upon interaction with the DnaJ-bound protein, DnaK hydrolyzes its bound ATP, resulting in the formation of a stable complex. GrpE releases ADP from DnaK; ATP binding to DnaK triggers the release of the substrate protein, thus completing the reaction cycle. Several rounds of ATP-dependent interactions between DnaJ, DnaK and GrpE are required for fully efficient folding. Also involved, together with DnaK and GrpE, in the DNA replication of plasmids through activation of initiation proteins. In Azotobacter vinelandii (strain DJ / ATCC BAA-1303), this protein is Chaperone protein DnaJ.